The chain runs to 618 residues: Delta-like protein 3 (618 aa).

The first 26 residues, 1 to 26 (MVSPRMSGLLSQTVILALIFLPQTRP), serve as a signal peptide directing secretion. At 27–492 (AGVFELQIHS…LRPGDPQRYL (466 aa)) the chain is on the extracellular side. The 40-residue stretch at 176-215 (ARCEPPAVGTACTRLCRPRSAPSRCGPGLRPCAPLEDECE) folds into the DSL domain. EGF-like domains lie at 216–249 (APLVCRAGCSPEHGFCEQPGECRCLEGWTGPLCT), 274–310 (GPGPCDGNPCANGGSCSETPRSFECTCPRGFYGLRCE), 312–351 (SGVTCADGPCFNGGLCVGGADPDSAYICHCPPGFQGSNCE), 353–389 (RVDRCSLQPCRNGGLCLDLGHALRCRCRAGFAGPRCE), 391–427 (DLDDCAGRACANGGTCVEGGGAHRCSCALGFGGRDCR), and 429–465 (RADPCAARPCAHGGRCYAHFSGLVCACAPGYMGARCE). 18 disulfides stabilise this stretch: Cys220/Cys231, Cys224/Cys237, Cys239/Cys248, Cys278/Cys289, Cys283/Cys298, Cys300/Cys309, Cys316/Cys327, Cys321/Cys339, Cys341/Cys350, Cys357/Cys368, Cys362/Cys377, Cys379/Cys388, Cys395/Cys406, Cys400/Cys415, Cys417/Cys426, Cys433/Cys444, Cys438/Cys453, and Cys455/Cys464. The chain crosses the membrane as a helical span at residues 493 to 513 (LPPALGLLVAAGVAGAALLLV). Over 514–618 (HVRRRGHSQD…PYPSSILSVK (105 aa)) the chain is Cytoplasmic. The segment covering 546 to 562 (NLRTQEGSGDGPSSSVD) has biased composition (polar residues). Residues 546 to 566 (NLRTQEGSGDGPSSSVDWNRP) form a disordered region.

In terms of assembly, can bind and activate Notch-1 or another Notch receptor. Ubiquitinated by MIB (MIB1 or MIB2), leading to its endocytosis and subsequent degradation.

Its subcellular location is the membrane. Inhibits primary neurogenesis. May be required to divert neurons along a specific differentiation pathway. Plays a role in the formation of somite boundaries during segmentation of the paraxial mesoderm. This is Delta-like protein 3 (DLL3) from Homo sapiens (Human).